We begin with the raw amino-acid sequence, 133 residues long: MIVGIGSDLIDIRRVEKALERHGERFTHRVFTEVERVKSDRRRMRAASYAKRFAAKEACAKALGTGLAQGVFWRDMGVVNLPGGKPTMHLTGGAAERLNALIPAGHRPLIHLTITDDFPLAQAFVIIEAVSVE.

Positions 8 and 57 each coordinate Mg(2+).

It belongs to the P-Pant transferase superfamily. AcpS family. Mg(2+) serves as cofactor.

It localises to the cytoplasm. It carries out the reaction apo-[ACP] + CoA = holo-[ACP] + adenosine 3',5'-bisphosphate + H(+). In terms of biological role, transfers the 4'-phosphopantetheine moiety from coenzyme A to a Ser of acyl-carrier-protein. The protein is Holo-[acyl-carrier-protein] synthase of Chelativorans sp. (strain BNC1).